The following is a 342-amino-acid chain: tRNA N6-adenosine threonylcarbamoyltransferase (342 aa).

2 residues coordinate Fe cation: His114 and His118. Residues 136–140, Asp169, Gly182, Asp186, and Asn275 contribute to the substrate site; that span reads LVSGG. Asp301 contacts Fe cation.

It belongs to the KAE1 / TsaD family. The cofactor is Fe(2+).

The protein resides in the cytoplasm. The enzyme catalyses L-threonylcarbamoyladenylate + adenosine(37) in tRNA = N(6)-L-threonylcarbamoyladenosine(37) in tRNA + AMP + H(+). In terms of biological role, required for the formation of a threonylcarbamoyl group on adenosine at position 37 (t(6)A37) in tRNAs that read codons beginning with adenine. Is involved in the transfer of the threonylcarbamoyl moiety of threonylcarbamoyl-AMP (TC-AMP) to the N6 group of A37, together with TsaE and TsaB. TsaD likely plays a direct catalytic role in this reaction. The polypeptide is tRNA N6-adenosine threonylcarbamoyltransferase (Streptococcus pyogenes serotype M3 (strain ATCC BAA-595 / MGAS315)).